The chain runs to 394 residues: MAKEVFQRTKPHMNVGTIGHVDHGKTTLTAAISIYCSKLNKDAKALKYEDIDNAPEEKARGITINARHIEYETANRHYAHVDCPGHADYIKNMITGAAQMDAAILLVAADSGAEPQTKEHLLLAQRMGIKKIIVFLNKLDLADPELVELVEVEVLELVEKYGFSANTPIIKGSAFGAMSNPEDPEATKCVKELLESMDNYFDLPERDIDKPFLLAVEDVFSISGRGTVATGRIERGVIKVGQEVEIVGIKETRKTTVTGVEMFQKILEQGQAGDNVGLLLRGVDKKDIERGQVLSAPGTITPHKKFKASIYCLTKEEGGRHKPFFPGYRPQFFFRTTDVTGVVALEGKEMVMPGDNVDIVVELISSIAMDKNVEFAVREGGRTVASGRILEILE.

Residues 10-205 (KPHMNVGTIG…SMDNYFDLPE (196 aa)) enclose the tr-type G domain. Positions 19–26 (GHVDHGKT) are G1. 19–26 (GHVDHGKT) is a binding site for GTP. Position 26 (Thr-26) interacts with Mg(2+). Residues 61-65 (GITIN) are G2. The tract at residues 82–85 (DCPG) is G3. Residues 82–86 (DCPGH) and 137–140 (NKLD) each bind GTP. Residues 137 to 140 (NKLD) form a G4 region. Residues 173–175 (SAF) are G5.

The protein belongs to the TRAFAC class translation factor GTPase superfamily. Classic translation factor GTPase family. EF-Tu/EF-1A subfamily. As to quaternary structure, monomer.

The protein resides in the cytoplasm. The catalysed reaction is GTP + H2O = GDP + phosphate + H(+). Its function is as follows. GTP hydrolase that promotes the GTP-dependent binding of aminoacyl-tRNA to the A-site of ribosomes during protein biosynthesis. The sequence is that of Elongation factor Tu from Borreliella afzelii (strain PKo) (Borrelia afzelii).